Here is a 359-residue protein sequence, read N- to C-terminus: Fructose-bisphosphate aldolase 1 (359 aa).

Ser50 contacts D-glyceraldehyde 3-phosphate. The Proton donor role is filled by Asp83. Zn(2+) contacts are provided by His84, Asp105, Glu142, and His198. Gly199 is a binding site for dihydroxyacetone phosphate. Residue His232 participates in Zn(2+) binding. Dihydroxyacetone phosphate is bound by residues 233–235 and 275–278; these read GSS and NIDT.

It belongs to the class II fructose-bisphosphate aldolase family. In terms of assembly, homodimer. Zn(2+) is required as a cofactor.

It catalyses the reaction beta-D-fructose 1,6-bisphosphate = D-glyceraldehyde 3-phosphate + dihydroxyacetone phosphate. It functions in the pathway carbohydrate biosynthesis; Calvin cycle. The protein operates within carbohydrate degradation; glycolysis; D-glyceraldehyde 3-phosphate and glycerone phosphate from D-glucose: step 4/4. Functionally, catalyzes the aldol condensation of dihydroxyacetone phosphate (DHAP or glycerone-phosphate) with glyceraldehyde 3-phosphate (G3P) to form fructose 1,6-bisphosphate (FBP) in gluconeogenesis and the reverse reaction in glycolysis. This Cereibacter sphaeroides (Rhodobacter sphaeroides) protein is Fructose-bisphosphate aldolase 1 (cfxA).